A 160-amino-acid polypeptide reads, in one-letter code: Suppressyn (160 aa).

The signal sequence occupies residues 1 to 39; that stretch reads MACIYPTTFYTSLPTKSLNMGISLTTILILSVAVLLSTA. The interval 137 to 160 is disordered; it reads AKASKPTTPPENRPRHFHSFIQKL.

In terms of assembly, interacts (secreted) with SLC1A5; mainly at cell surface. Specifically expressed in placenta by extravillous trophoblasts and syncytiotrophoblasts (at protein level).

The protein localises to the secreted. Its function is as follows. May play a role in trophoblasts syncytialization, the spontaneous fusion of their plasma membranes, an essential process in placental development. May negatively regulate cell-cell fusion by interacting with SLC1A5, the probable receptor on the cell surface of the fusogenic syncytin-1/ERVW-1. In Homo sapiens (Human), this protein is Suppressyn (ERVH48-1).